Reading from the N-terminus, the 283-residue chain is Pantothenate synthetase (283 aa).

Residue 30–37 (MGYLHEGH) coordinates ATP. H37 serves as the catalytic Proton donor. Q61 serves as a coordination point for (R)-pantoate. Q61 lines the beta-alanine pocket. Residue 147 to 150 (GQKD) participates in ATP binding. Q153 contacts (R)-pantoate. ATP-binding positions include V176 and 184 to 187 (MSSR).

The protein belongs to the pantothenate synthetase family. In terms of assembly, homodimer.

The protein resides in the cytoplasm. The catalysed reaction is (R)-pantoate + beta-alanine + ATP = (R)-pantothenate + AMP + diphosphate + H(+). It functions in the pathway cofactor biosynthesis; (R)-pantothenate biosynthesis; (R)-pantothenate from (R)-pantoate and beta-alanine: step 1/1. Its function is as follows. Catalyzes the condensation of pantoate with beta-alanine in an ATP-dependent reaction via a pantoyl-adenylate intermediate. The polypeptide is Pantothenate synthetase (Thermoanaerobacter sp. (strain X514)).